We begin with the raw amino-acid sequence, 305 residues long: Small ribosomal subunit biogenesis GTPase RsgA (305 aa).

The region spanning 67-224 is the CP-type G domain; sequence SSELVRPAVA…VADTPGFSSF (158 aa). GTP is bound by residues 116–119 and 166–174; these read NKID and GQSGVGKST. Zn(2+)-binding residues include Cys248, Cys253, His255, and Cys261.

It belongs to the TRAFAC class YlqF/YawG GTPase family. RsgA subfamily. Monomer. Associates with 30S ribosomal subunit, binds 16S rRNA. Zn(2+) is required as a cofactor.

It is found in the cytoplasm. Functionally, one of several proteins that assist in the late maturation steps of the functional core of the 30S ribosomal subunit. Helps release RbfA from mature subunits. May play a role in the assembly of ribosomal proteins into the subunit. Circularly permuted GTPase that catalyzes slow GTP hydrolysis, GTPase activity is stimulated by the 30S ribosomal subunit. This chain is Small ribosomal subunit biogenesis GTPase RsgA, found in Ruminiclostridium cellulolyticum (strain ATCC 35319 / DSM 5812 / JCM 6584 / H10) (Clostridium cellulolyticum).